We begin with the raw amino-acid sequence, 150 residues long: Large ribosomal subunit protein bL9 (150 aa).

Belongs to the bacterial ribosomal protein bL9 family.

Binds to the 23S rRNA. The protein is Large ribosomal subunit protein bL9 of Paraburkholderia phymatum (strain DSM 17167 / CIP 108236 / LMG 21445 / STM815) (Burkholderia phymatum).